The chain runs to 300 residues: 4-hydroxy-tetrahydrodipicolinate synthase (300 aa).

T55 contributes to the pyruvate binding site. Residue Y143 is the Proton donor/acceptor of the active site. The active-site Schiff-base intermediate with substrate is the K171. Residue I211 coordinates pyruvate.

Belongs to the DapA family. Homotetramer; dimer of dimers.

The protein localises to the cytoplasm. It carries out the reaction L-aspartate 4-semialdehyde + pyruvate = (2S,4S)-4-hydroxy-2,3,4,5-tetrahydrodipicolinate + H2O + H(+). The protein operates within amino-acid biosynthesis; L-lysine biosynthesis via DAP pathway; (S)-tetrahydrodipicolinate from L-aspartate: step 3/4. In terms of biological role, catalyzes the condensation of (S)-aspartate-beta-semialdehyde [(S)-ASA] and pyruvate to 4-hydroxy-tetrahydrodipicolinate (HTPA). The chain is 4-hydroxy-tetrahydrodipicolinate synthase from Mycolicibacterium paratuberculosis (strain ATCC BAA-968 / K-10) (Mycobacterium paratuberculosis).